The chain runs to 339 residues: Dihydroorotate dehydrogenase (quinone) (339 aa).

FMN contacts are provided by residues 62–66 (AGMDK) and Thr86. Residue Lys66 coordinates substrate. Residue 111 to 115 (NRMGF) coordinates substrate. FMN-binding residues include Asn139 and Asn172. Residue Asn172 participates in substrate binding. Ser175 serves as the catalytic Nucleophile. Asn177 contacts substrate. FMN-binding residues include Lys217 and Thr245. Residue 246-247 (NT) coordinates substrate. FMN contacts are provided by residues Gly268, Gly297, and 318-319 (YS).

The protein belongs to the dihydroorotate dehydrogenase family. Type 2 subfamily. As to quaternary structure, monomer. FMN is required as a cofactor.

It is found in the cell membrane. It catalyses the reaction (S)-dihydroorotate + a quinone = orotate + a quinol. The protein operates within pyrimidine metabolism; UMP biosynthesis via de novo pathway; orotate from (S)-dihydroorotate (quinone route): step 1/1. In terms of biological role, catalyzes the conversion of dihydroorotate to orotate with quinone as electron acceptor. The polypeptide is Dihydroorotate dehydrogenase (quinone) (Shewanella sp. (strain ANA-3)).